We begin with the raw amino-acid sequence, 496 residues long: MIRFSWVRLCSSAMAAAAASPDVQAITRAQAMQLDDLSPRKIASILDSYIVGQAEGKRAVAISLRNRWRRRQIEDEGLRRDILPKNILLVGPTGVGKTEISRRMAKLTEAPFVKVEATKYTEVGFKGKDVESIIEDLYSNAKTKAKRRLEIEREKEAHELALEIVFNGWHSCRSASGSFGSSTRNSGSGDSSAEEDKNSSSRDNVTFEEFKEKYKTQFKDDMVVIDVTQQPKGNTKPNASINSVEMLSVGILLGLGSESRGVKTRVTKRVEEALPLATQEALSRLVDETQISALARTLAEQDGVVFIDEIDKVVTEPASANADVSSTGVQQDLLPLIEGSNVTLKDGSQISTDNILFICSGAFHTVKTSDMIAELQGRLPVRVEMHALKEEDIRRILCEPKFNLLLQQKALMKTENIDLEFTPDAVDELARVTTKVNANAQNIGARRLHTVVERVMDEYSFNCQDYEGKKVVIDAEVVRKATGSLMNNIDLAKYIL.

A mitochondrion-targeting transit peptide spans 1–10; it reads MIRFSWVRLC. ATP contacts are provided by residues valine 51 and 94-99; that span reads GVGKTE. Low complexity predominate over residues 177–191; the sequence is GSFGSSTRNSGSGDS. The interval 177 to 204 is disordered; the sequence is GSFGSSTRNSGSGDSSAEEDKNSSSRDN. The ATP site is built by aspartate 308, glutamate 374, and arginine 446.

It belongs to the ClpX chaperone family. HslU subfamily. In terms of assembly, a double ring-shaped homohexamer of HslV is capped on each side by a ring-shaped HslU homohexamer. The assembly of the HslU/HslV complex (HslVU) is dependent on binding of ATP.

The protein resides in the mitochondrion matrix. It is found in the kinetoplast. Its function is as follows. ATPase subunit of a proteasome-like degradation complex; this subunit has chaperone activity. The binding of ATP and its subsequent hydrolysis by HslU are essential for unfolding of protein substrates subsequently hydrolyzed by HslV. HslU recognizes the N-terminal part of its protein substrates and unfolds these before they are guided to HslV for hydrolysis. The HslVU protease complex functions in mitochondrial DNA replication by regulating DNA helicase PIF2 protein levels. The protein is ATP-dependent protease ATPase subunit HslU2 (HslU2) of Trypanosoma brucei brucei (strain 927/4 GUTat10.1).